The following is a 295-amino-acid chain: UDP-N-acetylenolpyruvoylglucosamine reductase (295 aa).

The FAD-binding PCMH-type domain occupies 24 to 188 (KVGGNAEIFF…LKVVFKINKG (165 aa)). Residue arginine 168 is part of the active site. Serine 217 serves as the catalytic Proton donor. Residue glutamate 287 is part of the active site.

This sequence belongs to the MurB family. FAD serves as cofactor.

The protein localises to the cytoplasm. The enzyme catalyses UDP-N-acetyl-alpha-D-muramate + NADP(+) = UDP-N-acetyl-3-O-(1-carboxyvinyl)-alpha-D-glucosamine + NADPH + H(+). The protein operates within cell wall biogenesis; peptidoglycan biosynthesis. Functionally, cell wall formation. The chain is UDP-N-acetylenolpyruvoylglucosamine reductase from Rickettsia peacockii (strain Rustic).